A 162-amino-acid polypeptide reads, in one-letter code: 6,7-dimethyl-8-ribityllumazine synthase (162 aa).

5-amino-6-(D-ribitylamino)uracil contacts are provided by residues Phe23, Ala61 to Glu63, and Ala85 to Ile87. Residue Asp90–Thr91 participates in (2S)-2-hydroxy-3-oxobutyl phosphate binding. The active-site Proton donor is His93. Position 118 (Phe118) interacts with 5-amino-6-(D-ribitylamino)uracil. Residue Arg132 coordinates (2S)-2-hydroxy-3-oxobutyl phosphate.

This sequence belongs to the DMRL synthase family.

It carries out the reaction (2S)-2-hydroxy-3-oxobutyl phosphate + 5-amino-6-(D-ribitylamino)uracil = 6,7-dimethyl-8-(1-D-ribityl)lumazine + phosphate + 2 H2O + H(+). Its pathway is cofactor biosynthesis; riboflavin biosynthesis; riboflavin from 2-hydroxy-3-oxobutyl phosphate and 5-amino-6-(D-ribitylamino)uracil: step 1/2. Its function is as follows. Catalyzes the formation of 6,7-dimethyl-8-ribityllumazine by condensation of 5-amino-6-(D-ribitylamino)uracil with 3,4-dihydroxy-2-butanone 4-phosphate. This is the penultimate step in the biosynthesis of riboflavin. The polypeptide is 6,7-dimethyl-8-ribityllumazine synthase (Synechococcus sp. (strain CC9902)).